The sequence spans 377 residues: Opsin-1 (377 aa).

The Extracellular segment spans residues 1–58 (MDPGPGLAALQAWAAKSPAYGAANQTVVDKVPPDMMHMIDPHWYQFPPMNPLWHALLG). N-linked (GlcNAc...) asparagine glycosylation is present at N24. The chain crosses the membrane as a helical span at residues 59–79 (FTIGVLGFVSISGNGMVIYIF). Residues 80–92 (MSTKSLKTPSNLL) are Cytoplasmic-facing. A helical transmembrane segment spans residues 93-113 (VVNLAFSDFLMMCAMSPAMVV). The Extracellular portion of the chain corresponds to 114-129 (NCYYETWVWGPFACEL). C127 and C204 form a disulfide bridge. Residues 130–150 (YACAGSLFGCASIWTMTMIAF) traverse the membrane as a helical segment. Residues 151 to 169 (DRYNVIVKGIAAKPMTSNG) are Cytoplasmic-facing. Residues 170-190 (ALLRILGIWVFSLAWTLLPFF) form a helical membrane-spanning segment. The Extracellular portion of the chain corresponds to 191–220 (GWNRYVPEGNMTACGTDYLSKSWVSRSYIL). Residue N200 is glycosylated (N-linked (GlcNAc...) asparagine). Residues 221 to 241 (IYSVFVYFLPLLLIIYSYFFI) traverse the membrane as a helical segment. Residues 242-280 (VQAVAAHEKAMREQAKKMNVASLRSSEAANTSAECKLAK) lie on the Cytoplasmic side of the membrane. A helical transmembrane segment spans residues 281–301 (VALMTISLWFMAWTPYLVINY). The Extracellular segment spans residues 302–312 (TGVFESAPISP). The chain crosses the membrane as a helical span at residues 313-335 (LATIWGSLFAKANAVYNPIVYGI). The Cytoplasmic segment spans residues 336–377 (SHPKYQAALYAKFPSLQCQSAPEDAGSVASGTTAVSEEKPAA). The tract at residues 357-377 (PEDAGSVASGTTAVSEEKPAA) is disordered.

This sequence belongs to the G-protein coupled receptor 1 family. Opsin subfamily. As to expression, in the retina, expression is abundant and uniform in the anterior-posterior and oblique cells of the retinulae, with some expression in the proximal cells. There is no expression in the dorsal rim retinulae (at protein level).

The protein localises to the cell projection. It is found in the rhabdomere membrane. Visual pigments are the light-absorbing molecules that mediate vision. They consist of an apoprotein, opsin, covalently linked to cis-retinal. May play a role in photoperiodic photoreception. This Manduca sexta (Tobacco hawkmoth) protein is Opsin-1 (OP1).